Reading from the N-terminus, the 83-residue chain is U5-theraphotoxin-Hs1b 1 (83 aa).

A signal peptide spans 1–21; sequence MKTSMFLTLTGLVLLFVVCYA. Residues 22-49 constitute a propeptide that is removed on maturation; that stretch reads SESEEKEFPKELLSSIFAADSDFKEEER. 3 cysteine pairs are disulfide-bonded: C51/C63, C56/C68, and C62/C75.

It belongs to the neurotoxin 10 (Hwtx-1) family. 51 (Hntx-8) subfamily. Hntx-8 sub-subfamily. As to expression, expressed by the venom gland.

The protein resides in the secreted. Functionally, weakly inhibits 5HT3A receptors and Kv1.3/KCNA3 voltage-gated potassium channels. Agglutinates erythrocytes. This is U5-theraphotoxin-Hs1b 1 from Cyriopagopus schmidti (Chinese bird spider).